The chain runs to 32 residues: Cathepsin B-like cysteine proteinase (32 aa).

The propeptide at 1–22 (KPNYKRQFEPFSDELIHYINLE) is activation peptide.

This sequence belongs to the peptidase C1 family.

Its function is as follows. Thiol protease. This Fasciola hepatica (Liver fluke) protein is Cathepsin B-like cysteine proteinase.